Consider the following 341-residue polypeptide: MNTLVNILFIMIPLLFSVAYLVYFERKVIGAIQLRHGPSVVGPFGLLQPFADAIKLLVKEPIIPFRANTILFIMAPMLTFILALIVWAVIPFGAEVITENGQQIVIPKVIANVNIGVLYVLAISSLGIYGIIVAGWSSNSNYAFLGSIRSAAQMISYEVSMGLIVATVVITTGTLNLGEMVATKHSMPFWIDLLMMPIGVVFFISLLAETNRHPFDLPEAEAELVSGYNVEYSSMPFALFFLGEYANMILGSAMMTIFFLGGWYPPLKLSLLYKIPGLIWFVLKIVLLLFIFVWTRATIPRYRYDQLMRLGWKVFLPISVLWVILISGVLLFTGNLPGRGL.

8 consecutive transmembrane segments (helical) span residues 38–58 (PSVV…KLLV), 70–90 (ILFI…WAVI), 115–135 (IGVL…IVAG), 161–181 (MGLI…GEMV), 187–207 (MPFW…ISLL), 239–259 (LFFL…TIFF), 275–295 (IPGL…FVWT), and 314–334 (VFLP…LFTG).

Belongs to the complex I subunit 1 family. In terms of assembly, NDH-1 is composed of 14 different subunits. Subunits NuoA, H, J, K, L, M, N constitute the membrane sector of the complex.

Its subcellular location is the cell membrane. The catalysed reaction is a quinone + NADH + 5 H(+)(in) = a quinol + NAD(+) + 4 H(+)(out). NDH-1 shuttles electrons from NADH, via FMN and iron-sulfur (Fe-S) centers, to quinones in the respiratory chain. The immediate electron acceptor for the enzyme in this species is believed to be ubiquinone. Couples the redox reaction to proton translocation (for every two electrons transferred, four hydrogen ions are translocated across the cytoplasmic membrane), and thus conserves the redox energy in a proton gradient. This subunit may bind ubiquinone. This Wolbachia sp. subsp. Brugia malayi (strain TRS) protein is NADH-quinone oxidoreductase subunit H.